The following is a 496-amino-acid chain: Chaperone SurA (496 aa).

The signal sequence occupies residues 1 to 42; it reads MACKSTAVRSATRVAPTRRLGMVTGALVALMAGAALLPAAHA. The interval 53-80 is disordered; the sequence is RGIFTTPDASPSQPLLRGTLPGPSTASG. PpiC domains are found at residues 235–337 and 349–447; these read VQEY…KLVD and VAQT…QVEG.

It is found in the periplasm. The catalysed reaction is [protein]-peptidylproline (omega=180) = [protein]-peptidylproline (omega=0). In terms of biological role, chaperone involved in the correct folding and assembly of outer membrane proteins. Recognizes specific patterns of aromatic residues and the orientation of their side chains, which are found more frequently in integral outer membrane proteins. May act in both early periplasmic and late outer membrane-associated steps of protein maturation. In Ralstonia nicotianae (strain ATCC BAA-1114 / GMI1000) (Ralstonia solanacearum), this protein is Chaperone SurA.